We begin with the raw amino-acid sequence, 157 residues long: Crossover junction endodeoxyribonuclease RuvC (157 aa).

Active-site residues include Asp-7, Glu-67, and Asp-140. Mg(2+) contacts are provided by Asp-7, Glu-67, and Asp-140.

Belongs to the RuvC family. As to quaternary structure, homodimer which binds Holliday junction (HJ) DNA. The HJ becomes 2-fold symmetrical on binding to RuvC with unstacked arms; it has a different conformation from HJ DNA in complex with RuvA. In the full resolvosome a probable DNA-RuvA(4)-RuvB(12)-RuvC(2) complex forms which resolves the HJ. Mg(2+) serves as cofactor.

The protein localises to the cytoplasm. It catalyses the reaction Endonucleolytic cleavage at a junction such as a reciprocal single-stranded crossover between two homologous DNA duplexes (Holliday junction).. Functionally, the RuvA-RuvB-RuvC complex processes Holliday junction (HJ) DNA during genetic recombination and DNA repair. Endonuclease that resolves HJ intermediates. Cleaves cruciform DNA by making single-stranded nicks across the HJ at symmetrical positions within the homologous arms, yielding a 5'-phosphate and a 3'-hydroxyl group; requires a central core of homology in the junction. The consensus cleavage sequence is 5'-(A/T)TT(C/G)-3'. Cleavage occurs on the 3'-side of the TT dinucleotide at the point of strand exchange. HJ branch migration catalyzed by RuvA-RuvB allows RuvC to scan DNA until it finds its consensus sequence, where it cleaves and resolves the cruciform DNA. The protein is Crossover junction endodeoxyribonuclease RuvC of Rickettsia rickettsii (strain Iowa).